The chain runs to 316 residues: Acetyl-coenzyme A carboxylase carboxyl transferase subunit alpha (316 aa).

The CoA carboxyltransferase C-terminal domain maps to 39–293 (RLQDKSESLT…REQLNSQLHM (255 aa)).

The protein belongs to the AccA family. As to quaternary structure, acetyl-CoA carboxylase is a heterohexamer composed of biotin carboxyl carrier protein (AccB), biotin carboxylase (AccC) and two subunits each of ACCase subunit alpha (AccA) and ACCase subunit beta (AccD).

It localises to the cytoplasm. The catalysed reaction is N(6)-carboxybiotinyl-L-lysyl-[protein] + acetyl-CoA = N(6)-biotinyl-L-lysyl-[protein] + malonyl-CoA. Its pathway is lipid metabolism; malonyl-CoA biosynthesis; malonyl-CoA from acetyl-CoA: step 1/1. In terms of biological role, component of the acetyl coenzyme A carboxylase (ACC) complex. First, biotin carboxylase catalyzes the carboxylation of biotin on its carrier protein (BCCP) and then the CO(2) group is transferred by the carboxyltransferase to acetyl-CoA to form malonyl-CoA. The polypeptide is Acetyl-coenzyme A carboxylase carboxyl transferase subunit alpha (Stutzerimonas stutzeri (strain A1501) (Pseudomonas stutzeri)).